The sequence spans 167 residues: MKTNCEFPLLCLLIVLVANVEGEVEDTGLKMVKRLWRNWEDPEQRQLLDQGTELEKQREKRLWRNWEDLELRQLLNEFAENQREKRLWRNWERRQVANEDDGEKAKELWRNWEDLKRRQVADLNDEQETQRDKRLWRNWEDNHATLRKRSADSLSRQKRLGKERGKE.

The N-terminal stretch at methionine 1–glycine 22 is a signal peptide. Positions glutamate 23 to arginine 94 are excised as a propeptide. RLWRNWE repeat units lie at residues arginine 34–glutamate 40, arginine 61–glutamate 67, and arginine 86–glutamate 92. Glutamine 95 is subject to Pyrrolidone carboxylic acid. The stretch at glutamate 107–glutamate 113 is one RLWRNWE 4; approximate repeat. A propeptide spanning residues tryptophan 112–arginine 118 is cleaved from the precursor. Residue glutamine 119 is modified to Pyrrolidone carboxylic acid. The RLWRNWE 5 repeat unit spans residues arginine 134–glutamate 140. The propeptide occupies tryptophan 139 to glutamate 167. Positions arginine 147–glutamate 167 are disordered.

It belongs to the scoloptoxin-08 family. Expressed by the venom gland.

It is found in the secreted. This Ethmostigmus rubripes (Giant centipede) protein is U-scoloptoxin(08)-Er5a.